The following is a 375-amino-acid chain: Tyrosine--tRNA ligase (375 aa).

L-tyrosine contacts are provided by Y37, Y168, Q172, D175, and Q190. A 'KMSKS' region motif is present at residues 251–255 (KMSKS). K254 contacts ATP.

This sequence belongs to the class-I aminoacyl-tRNA synthetase family. TyrS type 4 subfamily. As to quaternary structure, homodimer.

Its subcellular location is the cytoplasm. It carries out the reaction tRNA(Tyr) + L-tyrosine + ATP = L-tyrosyl-tRNA(Tyr) + AMP + diphosphate + H(+). In terms of biological role, catalyzes the attachment of tyrosine to tRNA(Tyr) in a two-step reaction: tyrosine is first activated by ATP to form Tyr-AMP and then transferred to the acceptor end of tRNA(Tyr). This is Tyrosine--tRNA ligase from Thermococcus sibiricus (strain DSM 12597 / MM 739).